The following is a 237-amino-acid chain: Ribonuclease PH (237 aa).

Residues R86 and 124-126 contribute to the phosphate site; that span reads GTR.

It belongs to the RNase PH family. In terms of assembly, homohexameric ring arranged as a trimer of dimers.

It carries out the reaction tRNA(n+1) + phosphate = tRNA(n) + a ribonucleoside 5'-diphosphate. Phosphorolytic 3'-5' exoribonuclease that plays an important role in tRNA 3'-end maturation. Removes nucleotide residues following the 3'-CCA terminus of tRNAs; can also add nucleotides to the ends of RNA molecules by using nucleoside diphosphates as substrates, but this may not be physiologically important. Probably plays a role in initiation of 16S rRNA degradation (leading to ribosome degradation) during starvation. The polypeptide is Ribonuclease PH (Cereibacter sphaeroides (strain KD131 / KCTC 12085) (Rhodobacter sphaeroides)).